Here is a 249-residue protein sequence, read N- to C-terminus: DNA repair protein RecO (249 aa).

Belongs to the RecO family.

Involved in DNA repair and RecF pathway recombination. This chain is DNA repair protein RecO, found in Solidesulfovibrio magneticus (strain ATCC 700980 / DSM 13731 / RS-1) (Desulfovibrio magneticus).